The sequence spans 102 residues: Ferredoxin (102 aa).

2 4Fe-4S ferredoxin-type domains span residues 45–73 and 74–102; these read VSVN…ELVE and TWIE…EVMK. 8 residues coordinate [4Fe-4S] cluster: Cys54, Cys57, Cys60, Cys64, Cys83, Cys86, Cys89, and Cys93.

It depends on [4Fe-4S] cluster as a cofactor.

It participates in membrane lipid metabolism; glycerophospholipid metabolism. Ferredoxin that is the specific electron donor for the geranylgeranyl reductase GGR involved in the biosynthesis of archaeal membrane lipids. The protein is Ferredoxin of Methanosarcina acetivorans (strain ATCC 35395 / DSM 2834 / JCM 12185 / C2A).